The primary structure comprises 86 residues: Large ribosomal subunit protein bL27 (86 aa).

The span at 1–11 (MATKKAGGGSR) shows a compositional bias: gly residues. A disordered region spans residues 1-24 (MATKKAGGGSRNGRDSAGRRLGVK).

It belongs to the bacterial ribosomal protein bL27 family.

The chain is Large ribosomal subunit protein bL27 from Rickettsia africae (strain ESF-5).